Consider the following 75-residue polypeptide: UPF0352 protein ESA_01049 (75 aa).

Belongs to the UPF0352 family.

The sequence is that of UPF0352 protein ESA_01049 from Cronobacter sakazakii (strain ATCC BAA-894) (Enterobacter sakazakii).